The sequence spans 338 residues: Acyl-CoA Delta(11) desaturase (338 aa).

2 consecutive transmembrane segments (helical) span residues 33–53 (IVYF…YGLY) and 61–81 (WATV…VTAG). The Histidine box-1 signature appears at 83-88 (HRLWSH). The chain crosses the membrane as a helical span at residues 97–117 (LQILLMVMNSLAFQNTVIDWV). The Histidine box-2 signature appears at 120–124 (HRLHH). The next 2 membrane-spanning stretches (helical) occupy residues 181–201 (AIPF…VYGW) and 212–234 (AMLR…HIYG). Residues 260–264 (HNYHH) carry the Histidine box-3 motif. The tract at residues 318–338 (TNLWGLEDVDTPEDLKNTKGE) is disordered.

It belongs to the fatty acid desaturase type 1 family. It depends on Fe cation as a cofactor. In terms of tissue distribution, detected in the pheromone gland.

Its subcellular location is the membrane. It carries out the reaction an 11,12-saturated fatty acyl-CoA + 2 Fe(II)-[cytochrome b5] + O2 + 2 H(+) = an (11Z)-Delta(11)-fatty acyl-CoA + 2 Fe(III)-[cytochrome b5] + 2 H2O. In terms of biological role, catalyzes the formation of delta(11) fatty acyl precursors in the pheromone gland, and has high activity towards palmitic acid and stearic acid. The polypeptide is Acyl-CoA Delta(11) desaturase (Spodoptera littoralis (Egyptian cotton leafworm)).